We begin with the raw amino-acid sequence, 432 residues long: Trigger factor (432 aa).

In terms of domain architecture, PPIase FKBP-type spans 161–246; sequence EDRVTIDFTG…LKKVEERELP (86 aa).

The protein belongs to the FKBP-type PPIase family. Tig subfamily.

It is found in the cytoplasm. The catalysed reaction is [protein]-peptidylproline (omega=180) = [protein]-peptidylproline (omega=0). Functionally, involved in protein export. Acts as a chaperone by maintaining the newly synthesized protein in an open conformation. Functions as a peptidyl-prolyl cis-trans isomerase. This is Trigger factor from Citrobacter koseri (strain ATCC BAA-895 / CDC 4225-83 / SGSC4696).